The primary structure comprises 372 residues: Putative glutamate--cysteine ligase 2 (372 aa).

The protein belongs to the glutamate--cysteine ligase type 2 family. YbdK subfamily. In terms of assembly, homodimer.

It catalyses the reaction L-cysteine + L-glutamate + ATP = gamma-L-glutamyl-L-cysteine + ADP + phosphate + H(+). Its function is as follows. ATP-dependent carboxylate-amine ligase which exhibits weak glutamate--cysteine ligase activity. In Salmonella dublin (strain CT_02021853), this protein is Putative glutamate--cysteine ligase 2 (ybdK).